The following is a 495-amino-acid chain: PXA domain protein 1 (495 aa).

The 174-residue stretch at 1-174 folds into the PXA domain; it reads MAKLSSLLNP…KFIIYLSKAI (174 aa). 2 consecutive transmembrane segments (helical) span residues 7 to 27 and 235 to 255; these read LLNPIISKILEIYVYSWYSGI and WFFFYTLLYPWIALVSAFVAE. Polar residues-rich tracts occupy residues 402–419 and 427–436; these read AVSSPTKANTNKSHQRSF and DSQTPSENSA. The interval 402–436 is disordered; it reads AVSSPTKANTNKSHQRSFSIPKATKDSQTPSENSA. The helical transmembrane segment at 446 to 466 threads the bilayer; it reads AYSQIPVIPFFLPSDKLIMLV.

The protein localises to the endosome membrane. Functionally, required for required for normal vacuolar morphology and for vacuolar protein transport. Also required for endosome-to-Golgi protein transport. The protein is PXA domain protein 1 (pxa1) of Schizosaccharomyces pombe (strain 972 / ATCC 24843) (Fission yeast).